We begin with the raw amino-acid sequence, 358 residues long: Mitogen-activated protein kinase 1 (358 aa).

The residue at position 2 (A2) is an N-acetylalanine. The Protein kinase domain maps to 23–311 (YTNLSYIGEG…VEQALAHPYL (289 aa)). Position 27 is a phosphoserine; by SGK1 (S27). Residues 29 to 37 (IGEGAYGMV) and K52 contribute to the ATP site. The active-site Proton acceptor is D147. T183 is modified (phosphothreonine; by MAP2K1 and MAP2K2). Positions 183–185 (TEY) match the TXY motif. At Y185 the chain carries Phosphotyrosine; by MAP2K1 and MAP2K2. At T188 the chain carries Phosphothreonine; by autocatalysis. A phosphoserine mark is found at S244, S246, and S282.

Belongs to the protein kinase superfamily. CMGC Ser/Thr protein kinase family. MAP kinase subfamily. Binds both upstream activators and downstream substrates in multimolecular complexes. This interaction inhibits its tyrosine-kinase activity. Interacts with ADAM15, ARHGEF2, ARRB2, DAPK1 (via death domain), HSF4, IER3, IPO7, NISCH, SGK1, and isoform 1 of NEK2. Interacts (via phosphorylated form) with TPR (via C-terminal region and phosphorylated form); the interaction requires dimerization of MAPK1/ERK2 and increases following EGF stimulation. Interacts with MAP2K1. Interacts with DUSP6. Interacts (phosphorylated form) with CAV2 ('Tyr-19'-phosphorylated form); the interaction, promoted by insulin, leads to nuclear location and MAPK1 activation. Interacts with DCC. Interacts with MORG1. Interacts with PEA15. Interacts with MKNK2. MKNK2 isoform 1 binding prevents from dephosphorylation and inactivation. The phosphorylated form interacts with PML. Interacts with STYX. Interacts with CDK2AP2. Interacts with CAVIN4. Interacts with DUSP7; the interaction enhances DUSP7 phosphatase activity. Interacts with GIT1; this interaction is necessary for MAPK1 localization to focal adhesions. Interacts with ZNF263. Interacts with phosphoglycerate kinase PGK1; the interaction is direct, occurs under hypoxic conditions, and promotes interaction between PGK1 and PIN1. Mg(2+) serves as cofactor. Dually phosphorylated on Thr-183 and Tyr-185, which activates the enzyme. Ligand-activated ALK induces tyrosine phosphorylation. Dephosphorylated by PTPRJ at Tyr-185. Phosphorylated upon FLT3 and KIT signaling. Dephosphorylated by DUSP1 and DUSP2 at Thr-183 and Tyr-185. In terms of processing, ISGylated. Post-translationally, ubiquitinated by TRIM15 via 'Lys-63'-linked ubiquitination; leading to activation. Deubiquitinated by CYLD. Widely expressed.

The protein localises to the cytoplasm. The protein resides in the cytoskeleton. It is found in the spindle. It localises to the nucleus. Its subcellular location is the microtubule organizing center. The protein localises to the centrosome. The protein resides in the membrane. It is found in the caveola. It localises to the cell junction. Its subcellular location is the focal adhesion. It catalyses the reaction L-seryl-[protein] + ATP = O-phospho-L-seryl-[protein] + ADP + H(+). It carries out the reaction L-threonyl-[protein] + ATP = O-phospho-L-threonyl-[protein] + ADP + H(+). Its activity is regulated as follows. Phosphorylated by MAP2K1/MEK1 and MAP2K2/MEK2 on Thr-183 and Tyr-185 in response to external stimuli like insulin or NGF. Both phosphorylations are required for activity. This phosphorylation causes dramatic conformational changes, which enable full activation and interaction of MAPK1/ERK2 with its substrates. Phosphorylation on Ser-27 by SGK1 results in its activation by enhancing its interaction with MAP2K1/MEK1 and MAP2K2/MEK2. Dephosphorylated and inactivated by DUSP1, DUSP3, DUSP6 and DUSP9. Inactivated by pyrimidylpyrrole inhibitors. Serine/threonine kinase which acts as an essential component of the MAP kinase signal transduction pathway. MAPK1/ERK2 and MAPK3/ERK1 are the 2 MAPKs which play an important role in the MAPK/ERK cascade. They participate also in a signaling cascade initiated by activated KIT and KITLG/SCF. Depending on the cellular context, the MAPK/ERK cascade mediates diverse biological functions such as cell growth, adhesion, survival and differentiation through the regulation of transcription, translation, cytoskeletal rearrangements. The MAPK/ERK cascade also plays a role in initiation and regulation of meiosis, mitosis, and postmitotic functions in differentiated cells by phosphorylating a number of transcription factors. About 160 substrates have already been discovered for ERKs. Many of these substrates are localized in the nucleus, and seem to participate in the regulation of transcription upon stimulation. However, other substrates are found in the cytosol as well as in other cellular organelles, and those are responsible for processes such as translation, mitosis and apoptosis. Moreover, the MAPK/ERK cascade is also involved in the regulation of the endosomal dynamics, including lysosome processing and endosome cycling through the perinuclear recycling compartment (PNRC); as well as in the fragmentation of the Golgi apparatus during mitosis. The substrates include transcription factors (such as ATF2, BCL6, ELK1, ERF, FOS, HSF4 or SPZ1), cytoskeletal elements (such as CANX, CTTN, GJA1, MAP2, MAPT, PXN, SORBS3 or STMN1), regulators of apoptosis (such as BAD, BTG2, CASP9, DAPK1, IER3, MCL1 or PPARG), regulators of translation (such as EIF4EBP1 and FXR1) and a variety of other signaling-related molecules (like ARHGEF2, DCC, FRS2 or GRB10). Protein kinases (such as RAF1, RPS6KA1/RSK1, RPS6KA3/RSK2, RPS6KA2/RSK3, RPS6KA6/RSK4, SYK, MKNK1/MNK1, MKNK2/MNK2, RPS6KA5/MSK1, RPS6KA4/MSK2, MAPKAPK3 or MAPKAPK5) and phosphatases (such as DUSP1, DUSP4, DUSP6 or DUSP16) are other substrates which enable the propagation the MAPK/ERK signal to additional cytosolic and nuclear targets, thereby extending the specificity of the cascade. Mediates phosphorylation of TPR in response to EGF stimulation. May play a role in the spindle assembly checkpoint. Phosphorylates PML and promotes its interaction with PIN1, leading to PML degradation. Phosphorylates CDK2AP2. Phosphorylates phosphoglycerate kinase PGK1 under hypoxic conditions to promote its targeting to the mitochondrion and suppress the formation of acetyl-coenzyme A from pyruvate. Its function is as follows. Acts as a transcriptional repressor. Binds to a [GC]AAA[GC] consensus sequence. Repress the expression of interferon gamma-induced genes. Seems to bind to the promoter of CCL5, DMP1, IFIH1, IFITM1, IRF7, IRF9, LAMP3, OAS1, OAS2, OAS3 and STAT1. Transcriptional activity is independent of kinase activity. The chain is Mitogen-activated protein kinase 1 from Mus musculus (Mouse).